A 455-amino-acid chain; its full sequence is Serine--tRNA ligase (455 aa).

252 to 254 is an L-serine binding site; it reads TSE. ATP-binding positions include 283–285 and Val-299; that span reads RKE. L-serine is bound at residue Glu-306. 370–373 contacts ATP; sequence EVVS. Residue Thr-406 coordinates L-serine.

It belongs to the class-II aminoacyl-tRNA synthetase family. Type-1 seryl-tRNA synthetase subfamily. In terms of assembly, homodimer. The tRNA molecule binds across the dimer.

It is found in the cytoplasm. It carries out the reaction tRNA(Ser) + L-serine + ATP = L-seryl-tRNA(Ser) + AMP + diphosphate + H(+). It catalyses the reaction tRNA(Sec) + L-serine + ATP = L-seryl-tRNA(Sec) + AMP + diphosphate + H(+). The protein operates within aminoacyl-tRNA biosynthesis; selenocysteinyl-tRNA(Sec) biosynthesis; L-seryl-tRNA(Sec) from L-serine and tRNA(Sec): step 1/1. In terms of biological role, catalyzes the attachment of serine to tRNA(Ser). Is also able to aminoacylate tRNA(Sec) with serine, to form the misacylated tRNA L-seryl-tRNA(Sec), which will be further converted into selenocysteinyl-tRNA(Sec). The chain is Serine--tRNA ligase from Thermococcus sibiricus (strain DSM 12597 / MM 739).